A 446-amino-acid chain; its full sequence is Na(+)-translocating NADH-quinone reductase subunit A (446 aa).

The protein belongs to the NqrA family. In terms of assembly, composed of six subunits; NqrA, NqrB, NqrC, NqrD, NqrE and NqrF.

It catalyses the reaction a ubiquinone + n Na(+)(in) + NADH + H(+) = a ubiquinol + n Na(+)(out) + NAD(+). NQR complex catalyzes the reduction of ubiquinone-1 to ubiquinol by two successive reactions, coupled with the transport of Na(+) ions from the cytoplasm to the periplasm. NqrA to NqrE are probably involved in the second step, the conversion of ubisemiquinone to ubiquinol. The chain is Na(+)-translocating NADH-quinone reductase subunit A from Vibrio atlanticus (strain LGP32) (Vibrio splendidus (strain Mel32)).